Reading from the N-terminus, the 151-residue chain is Histone H2A.2.1 (151 aa).

Met-1 carries the N-acetylmethionine modification. 2 disordered regions span residues Met-1–Val-22 and Glu-129–Ala-151. 2 short sequence motifs (SPKK motif) span residues Ser-140 to Lys-143 and Ser-147 to Lys-150. Positions Ser-140 to Ala-151 are enriched in basic residues.

This sequence belongs to the histone H2A family. In terms of assembly, the nucleosome is a histone octamer containing two molecules each of H2A, H2B, H3 and H4 assembled in one H3-H4 heterotetramer and two H2A-H2B heterodimers. The octamer wraps approximately 147 bp of DNA. Phosphorylated within its C-terminal part, probably at the SPKK motifs.

The protein localises to the nucleus. Its subcellular location is the chromosome. In terms of biological role, core component of nucleosome. Nucleosomes wrap and compact DNA into chromatin, limiting DNA accessibility to the cellular machineries which require DNA as a template. Histones thereby play a central role in transcription regulation, DNA repair, DNA replication and chromosomal stability. DNA accessibility is regulated via a complex set of post-translational modifications of histones, also called histone code, and nucleosome remodeling. This is Histone H2A.2.1 from Triticum aestivum (Wheat).